A 475-amino-acid chain; its full sequence is Putative histidine permease (475 aa).

12 helical membrane-spanning segments follow: residues 20–40 (LFMI…TGYT), 44–64 (AGPG…YLVM), 87–107 (FIGP…WVVT), 127–147 (SVWM…AFSV), 162–182 (IVTI…LISL), 199–219 (GLFP…SFAF), 246–266 (VAWR…GLIS), 277–297 (FVAV…NFVI), 341–361 (ALMI…VAPG), 363–383 (VYVV…MSIA), 410–430 (YPLM…GLAF), and 434–454 (QRIA…IYHF).

The protein belongs to the amino acid-polyamine-organocation (APC) superfamily.

It localises to the cell membrane. The polypeptide is Putative histidine permease (hutM) (Bacillus subtilis (strain 168)).